We begin with the raw amino-acid sequence, 246 residues long: Bis(5'-nucleosyl)-tetraphosphatase PrpE [asymmetrical] (246 aa).

The protein belongs to the PrpE family. The cofactor is Ni(2+).

It carries out the reaction P(1),P(4)-bis(5'-guanosyl) tetraphosphate + H2O = GMP + GTP + 2 H(+). Its function is as follows. Asymmetrically hydrolyzes Ap4p to yield AMP and ATP. The polypeptide is Bis(5'-nucleosyl)-tetraphosphatase PrpE [asymmetrical] (Bacillus cereus (strain B4264)).